Consider the following 250-residue polypeptide: Indole-3-glycerol phosphate synthase (250 aa).

Belongs to the TrpC family.

The catalysed reaction is 1-(2-carboxyphenylamino)-1-deoxy-D-ribulose 5-phosphate + H(+) = (1S,2R)-1-C-(indol-3-yl)glycerol 3-phosphate + CO2 + H2O. The protein operates within amino-acid biosynthesis; L-tryptophan biosynthesis; L-tryptophan from chorismate: step 4/5. This chain is Indole-3-glycerol phosphate synthase, found in Bacillus pumilus (strain SAFR-032).